The following is a 441-amino-acid chain: C-terminal-binding protein 1 (441 aa).

An interaction with GLIS2 1 region spans residues 1-70 (MGSSHLLNKG…EIHEKVLNEA (70 aa)). NAD(+)-binding positions include S100, 180–185 (IGLGRV), D204, 237–243 (CGLNEHN), 264–266 (TAR), and D290. Residue R266 is part of the active site. The interval 288–360 (ALDVHESEPF…VNKDHLTAAT (73 aa)) is interaction with GLIS2 2. E295 is an active-site residue. The residue at position 300 (S300) is a Phosphoserine. The active-site Proton donor is the H315. 315–318 (HAAW) contacts NAD(+). The disordered stretch occupies residues 409–441 (SHGLPPVAHPPHAPSPGQTVKPEADRDHTSDQL). S423 is subject to Phosphoserine. K429 is covalently cross-linked (Glycyl lysine isopeptide (Lys-Gly) (interchain with G-Cter in SUMO)). Residues 430–441 (PEADRDHTSDQL) show a composition bias toward basic and acidic residues.

It belongs to the D-isomer specific 2-hydroxyacid dehydrogenase family. As to quaternary structure, homo- or heterodimer. Heterodimer with CTBP2. Interacts with ELK3 (via its PXDLS motif). Interacts with RBBP8 (via its PXDLS motif). Interacts with PNN, MECOM and ZFHX1B. Interacts with ZNF366 (via PXDLS motif). Interaction with SATB1 (non-acetylated form); the interaction stabilizes its attachment to DNA and promotes transcription repression. Interacts with PRDM16; the interaction represses white adipose tissue (WAT)-specific genes expression. Interacts with GLIS2, HIPK2, FOXP1, FOXP2, HDAC4, HDAC5, HDAC9, NRIP1, WIZ and ZNF217. Interacts with BCL6; the interaction is required for BCL6 transcriptional autoinhibition and inhibition of some BCL6 target genes. Interacts with IKZF4. Interacts with MCRIP1 (unphosphorylated form, via the PXDLS motif); competitively inhibiting CTBP-ZEB1 interaction. Interacts with Bassoon/BSN; this interaction targets and anchors CTBP1 to presynapses. Interacts with SIMC1. The cofactor is NAD(+). Post-translationally, ADP-ribosylated; when cells are exposed to brefeldin A. The level of phosphorylation appears to be regulated during the cell cycle. Phosphorylation by HIPK2 on Ser-423 induces proteasomal degradation. In terms of processing, sumoylation on Lys-429 is promoted by the E3 SUMO-protein ligase CBX4. As to expression, expressed in a wide range of adult tissues.

Its subcellular location is the cytoplasm. The protein localises to the nucleus. Its function is as follows. Corepressor targeting diverse transcription regulators such as GLIS2 or BCL6. Has dehydrogenase activity. Involved in controlling the equilibrium between tubular and stacked structures in the Golgi complex. Functions in brown adipose tissue (BAT) differentiation. In Mus musculus (Mouse), this protein is C-terminal-binding protein 1 (Ctbp1).